The sequence spans 382 residues: Succinate--CoA ligase [ADP-forming] subunit beta (382 aa).

In terms of domain architecture, ATP-grasp spans 9–237 (RDLLARYGIP…PSAEPEAERR (229 aa)). ATP contacts are provided by residues Lys45, 52 to 54 (GRG), Ile94, and Glu99. 2 residues coordinate Mg(2+): Asn192 and Asp206. Substrate is bound by residues Asn257 and 314 to 316 (GIT).

The protein belongs to the succinate/malate CoA ligase beta subunit family. Heterotetramer of two alpha and two beta subunits. Mg(2+) serves as cofactor.

The catalysed reaction is succinate + ATP + CoA = succinyl-CoA + ADP + phosphate. It carries out the reaction GTP + succinate + CoA = succinyl-CoA + GDP + phosphate. It participates in carbohydrate metabolism; tricarboxylic acid cycle; succinate from succinyl-CoA (ligase route): step 1/1. Functionally, succinyl-CoA synthetase functions in the citric acid cycle (TCA), coupling the hydrolysis of succinyl-CoA to the synthesis of either ATP or GTP and thus represents the only step of substrate-level phosphorylation in the TCA. The beta subunit provides nucleotide specificity of the enzyme and binds the substrate succinate, while the binding sites for coenzyme A and phosphate are found in the alpha subunit. This is Succinate--CoA ligase [ADP-forming] subunit beta from Chloroflexus aggregans (strain MD-66 / DSM 9485).